Reading from the N-terminus, the 369-residue chain is Protein phosphatase 1 regulatory inhibitor subunit PPP1R8 homolog (369 aa).

Residues 1–11 (MYGRSGLDRFK) show a composition bias toward basic and acidic residues. The disordered stretch occupies residues 1-26 (MYGRSGLDRFKKSQTSEPFSVSANPP). Residues 13 to 23 (SQTSEPFSVSA) show a composition bias toward polar residues. The FHA domain occupies 87–138 (HIFGRQHQTCDFVLDHQSVSRQHAAVVPHKNGSIFVIDLGSAHGTFVANERL). Positions 345–369 (VSQPAAETECGGVGEEDDNDDLFGD) are disordered. Over residues 358–369 (GEEDDNDDLFGD) the composition is skewed to acidic residues.

Interacts with human protein phosphatase PPP1C.

Inhibitor of protein-phosphatase 1 (PP1). Binds to and inhibits PP1 activity. This is Protein phosphatase 1 regulatory inhibitor subunit PPP1R8 homolog from Arabidopsis thaliana (Mouse-ear cress).